The sequence spans 337 residues: MKIAVDAMGGDHAPKEIVLGVMKAVAQYKDVEILLFGDETKINEYLTDKTRVKIIHTDEKIESDDEPVRAVKRKKKASMVLAAQAVKDGEADACISAGNTGALMSTGLFVIGRIKGIDRPALAPTLPTVTGKGFVMLDLGANAEAKPEHLLQFGLMGSVYAEKVRKIDRPRVALLNIGTEETKGNDLTKKSFELMKNQDAYEFIGNIEARDLLMDVADVVVTDGFTGNMVLKSIEGTGAAFLSMLKMSLLNGFKNKVAASFLKKDLMALKAKMDYSEYGGACLFGVQAPVVKAHGSSNANGIFTTIRQVREMVEKQVVETIKAEVDKVKVGGTESND.

Belongs to the PlsX family. As to quaternary structure, homodimer. Probably interacts with PlsY.

Its subcellular location is the cytoplasm. It carries out the reaction a fatty acyl-[ACP] + phosphate = an acyl phosphate + holo-[ACP]. Its pathway is lipid metabolism; phospholipid metabolism. Catalyzes the reversible formation of acyl-phosphate (acyl-PO(4)) from acyl-[acyl-carrier-protein] (acyl-ACP). This enzyme utilizes acyl-ACP as fatty acyl donor, but not acyl-CoA. The sequence is that of Phosphate acyltransferase from Listeria monocytogenes serotype 4b (strain F2365).